Reading from the N-terminus, the 243-residue chain is UPF0688 protein C1orf174 (243 aa).

Disordered regions lie at residues 78 to 100 and 132 to 243; these read NDSASLPKVTPETPCENEFAEGS and LAKT…DAEM. Residues 145–157 show a composition bias toward low complexity; the sequence is SAGSGAEESNSSS. Phosphoserine is present on residues Ser-148 and Ser-189. A compositionally biased stretch (acidic residues) spans 233 to 243; that stretch reads DDDDDDDDAEM.

Belongs to the UPF0688 family.

It is found in the nucleus. The sequence is that of UPF0688 protein C1orf174 (C1orf174) from Homo sapiens (Human).